A 91-amino-acid polypeptide reads, in one-letter code: UPF0250 protein BB0170 (91 aa).

It belongs to the UPF0250 family.

This chain is UPF0250 protein BB0170, found in Bordetella bronchiseptica (strain ATCC BAA-588 / NCTC 13252 / RB50) (Alcaligenes bronchisepticus).